Here is a 232-residue protein sequence, read N- to C-terminus: Probable caffeoyl-CoA O-methyltransferase At4g26220 (232 aa).

Lys-7 serves as a coordination point for substrate. S-adenosyl-L-methionine is bound by residues Thr-49, Glu-71, 73–74, Ser-79, Asp-97, and Ala-126; that span reads GV. Asp-149 contributes to the substrate binding site. Asp-149 contacts a divalent metal cation. Position 151 (Asp-151) interacts with S-adenosyl-L-methionine. A divalent metal cation is bound by residues Asp-175 and Asn-176.

The protein belongs to the class I-like SAM-binding methyltransferase superfamily. Cation-dependent O-methyltransferase family. CCoAMT subfamily. A divalent metal cation is required as a cofactor.

It carries out the reaction (E)-caffeoyl-CoA + S-adenosyl-L-methionine = (E)-feruloyl-CoA + S-adenosyl-L-homocysteine + H(+). The protein operates within aromatic compound metabolism; phenylpropanoid biosynthesis. In terms of biological role, methylates caffeoyl-CoA to feruloyl-CoA and 5-hydroxyferuloyl-CoA to sinapoyl-CoA. Plays a role in the synthesis of feruloylated polysaccharides. Involved in the reinforcement of the plant cell wall. Also involved in the responding to wounding or pathogen challenge by the increased formation of cell wall-bound ferulic acid polymers. In Arabidopsis thaliana (Mouse-ear cress), this protein is Probable caffeoyl-CoA O-methyltransferase At4g26220.